A 563-amino-acid polypeptide reads, in one-letter code: Beta-catenin-like protein 1 (563 aa).

The residue at position 1 (methionine 1) is an N-acetylmethionine. The disordered stretch occupies residues 1 to 49 (MDVGELLSYQPNRGTKRPRDDEEEEQKMRRKQTGTRERGRYREEEMTVV). The short motif at 16 to 33 (KRPRDDEEEEQKMRRKQT) is the Nuclear localization signal element. Over residues 34–45 (GTRERGRYREEE) the composition is skewed to basic and acidic residues. HEAT repeat units follow at residues 79-129 (ESSV…VVAT) and 134-176 (YHLL…TLHE). Lysine 91 carries the N6-acetyllysine modification. The Nuclear export signal (NES) motif lies at 130–140 (MPDLYHLLVEL). ARM repeat units follow at residues 178–228 (EEGA…MAEF), 229–273 (RPEM…LQDN), 274–323 (DENR…CLML), 325–363 (SNRERFLKGEGLQLMNLMLREKKISRSSALKVLDHAMIG), and 364–417 (PEGT…LLRN). Serine 389 bears the Phosphoserine mark. Positions 476-540 (DTEEEFYLRR…HIIKEYAENI (65 aa)) form a coiled coil. Serine 545 is modified (phosphoserine).

As to quaternary structure, component of the PRP19-CDC5L splicing complex composed of a core complex comprising a homotetramer of PRPF19, CDC5L, PLRG1 and BCAS2, and at least three less stably associated proteins CTNNBL1, CWC15 and HSPA8. Interacts directly with CWC15 and CDC5L in the complex. Interacts with AICDA; the interaction is important for the antibody diversification activity of AICDA. Interacts with PRPF31 (via its NLS). Interacts (via its N-terminal NLS) with KPNA1 and KPNA2. In terms of tissue distribution, widely expressed with highest levels in skeletal muscle, placenta, heart, spleen, testis and thyroid.

The protein localises to the nucleus. It is found in the cytoplasm. In terms of biological role, component of the PRP19-CDC5L complex that forms an integral part of the spliceosome and is required for activating pre-mRNA splicing. Participates in AID/AICDA-mediated somatic hypermutation (SHM) and class-switch recombination (CSR), 2 processes resulting in the production of high-affinity, mutated isotype-switched antibodies. This is Beta-catenin-like protein 1 (CTNNBL1) from Homo sapiens (Human).